The chain runs to 158 residues: RNA pyrophosphohydrolase (158 aa).

A Nudix hydrolase domain is found at 9 to 151; it reads PLRNGVGIVV…KLHVYKDVKE (143 aa). Residues 43–64 carry the Nudix box motif; that stretch reads GGVDKGEDYLTAAYRELEEETS.

Belongs to the Nudix hydrolase family. RppH subfamily. A divalent metal cation serves as cofactor.

Its function is as follows. Accelerates the degradation of transcripts by removing pyrophosphate from the 5'-end of triphosphorylated RNA, leading to a more labile monophosphorylated state that can stimulate subsequent ribonuclease cleavage. The polypeptide is RNA pyrophosphohydrolase (Pelagibacter ubique (strain HTCC1062)).